We begin with the raw amino-acid sequence, 148 residues long: HTH-type transcriptional regulator Ptr1 (148 aa).

Positions 2 to 63 (LDRIDLKILR…SINPKNLGFE (62 aa)) constitute an HTH asnC-type domain. Residues 21–40 (FREIGRELGISEGTVRNRVK) constitute a DNA-binding region (H-T-H motif).

Homodimer.

In terms of biological role, participates in positive as well as negative regulation of transcription. Binds to its own promoter. This is HTH-type transcriptional regulator Ptr1 (ptr1) from Methanocaldococcus jannaschii (strain ATCC 43067 / DSM 2661 / JAL-1 / JCM 10045 / NBRC 100440) (Methanococcus jannaschii).